We begin with the raw amino-acid sequence, 180 residues long: Pro-glucagon (180 aa).

The first 20 residues, 1-20, serve as a signal peptide directing secretion; sequence MKNIYIVAGFFVVLVQGSWQ. The segment at 25-59 is disordered; the sequence is DTEEKSRSFPASQTDPLEDPDQINEDKRHSQGTFT. A Phosphoserine modification is found at Ser54. Residues 84 to 89 constitute a propeptide that is removed on maturation; the sequence is NRNNIA. 2 positions are modified to phosphoserine: Ser105 and Ser108. Residue Arg127 is modified to Arginine amide. Positions 131–145 are excised as a propeptide; that stretch reads DFPEEVTIVEELGRR. A phosphoserine mark is found at Ser150 and Ser152.

It belongs to the glucagon family. In terms of processing, proglucagon is post-translationally processed in a tissue-specific manner in pancreatic A cells and intestinal L cells. In pancreatic A cells, the major bioactive hormone is glucagon cleaved by PCSK2/PC2. In the intestinal L cells PCSK1/PC1 liberates GLP-1, GLP-2, glicentin and oxyntomodulin. GLP-1 is further N-terminally truncated by post-translational processing in the intestinal L cells resulting in GLP-1(7-37) GLP-1-(7-36)amide. The C-terminal amidation is neither important for the metabolism of GLP-1 nor for its effects on the endocrine pancreas.

It localises to the secreted. Functionally, plays a key role in glucose metabolism and homeostasis. Regulates blood glucose by increasing gluconeogenesis and decreasing glycolysis. A counterregulatory hormone of insulin, raises plasma glucose levels in response to insulin-induced hypoglycemia. Plays an important role in initiating and maintaining hyperglycemic conditions in diabetes. Potent stimulator of glucose-dependent insulin release. Also stimulates insulin release in response to IL6. Plays important roles on gastric motility and the suppression of plasma glucagon levels. May be involved in the suppression of satiety and stimulation of glucose disposal in peripheral tissues, independent of the actions of insulin. Has growth-promoting activities on intestinal epithelium. May also regulate the hypothalamic pituitary axis (HPA) via effects on LH, TSH, CRH, oxytocin, and vasopressin secretion. Increases islet mass through stimulation of islet neogenesis and pancreatic beta cell proliferation. Inhibits beta cell apoptosis. In terms of biological role, stimulates intestinal growth and up-regulates villus height in the small intestine, concomitant with increased crypt cell proliferation and decreased enterocyte apoptosis. The gastrointestinal tract, from the stomach to the colon is the principal target for GLP-2 action. Plays a key role in nutrient homeostasis, enhancing nutrient assimilation through enhanced gastrointestinal function, as well as increasing nutrient disposal. Stimulates intestinal glucose transport and decreases mucosal permeability. Its function is as follows. Significantly reduces food intake. Inhibits gastric emptying in humans. Suppression of gastric emptying may lead to increased gastric distension, which may contribute to satiety by causing a sensation of fullness. Functionally, may modulate gastric acid secretion and the gastro-pyloro-duodenal activity. May play an important role in intestinal mucosal growth in the early period of life. The chain is Pro-glucagon (GCG) from Mesocricetus auratus (Golden hamster).